The following is a 652-amino-acid chain: DNA ligase (652 aa).

NAD(+) is bound by residues 29-33, 78-79, and E107; these read DSEYD and SL. The active-site N6-AMP-lysine intermediate is the K109. Residues R130, E164, K278, and K302 each contribute to the NAD(+) site. Residues C395, C398, C413, and C418 each contribute to the Zn(2+) site. The BRCT domain occupies 577-652; the sequence is VADAALSGLT…VRDEAWLESL (76 aa).

The protein belongs to the NAD-dependent DNA ligase family. LigA subfamily. Requires Mg(2+) as cofactor. It depends on Mn(2+) as a cofactor.

It carries out the reaction NAD(+) + (deoxyribonucleotide)n-3'-hydroxyl + 5'-phospho-(deoxyribonucleotide)m = (deoxyribonucleotide)n+m + AMP + beta-nicotinamide D-nucleotide.. Functionally, DNA ligase that catalyzes the formation of phosphodiester linkages between 5'-phosphoryl and 3'-hydroxyl groups in double-stranded DNA using NAD as a coenzyme and as the energy source for the reaction. It is essential for DNA replication and repair of damaged DNA. In Streptococcus pneumoniae (strain JJA), this protein is DNA ligase.